The primary structure comprises 240 residues: Ribonuclease P protein component (240 aa).

A disordered region spans residues 1-140 (MDEKDLATQQ…KKAGGKGLVS (140 aa)). Over residues 40–51 (APPPHRVIPPHP) the composition is skewed to pro residues. The insert stretch occupies residues 47-123 (IPPHPGLRQD…PGPDRDGGSK (77 aa)). The span at 122-132 (SKASRASSPKK) shows a compositional bias: low complexity.

Belongs to the RnpA family. As to quaternary structure, consists of a catalytic RNA component (M1 or rnpB) and a protein subunit.

It catalyses the reaction Endonucleolytic cleavage of RNA, removing 5'-extranucleotides from tRNA precursor.. Functionally, RNaseP catalyzes the removal of the 5'-leader sequence from pre-tRNA to produce the mature 5'-terminus. It can also cleave other RNA substrates such as 4.5S RNA. The protein component plays an auxiliary but essential role in vivo by binding to the 5'-leader sequence and broadening the substrate specificity of the ribozyme. The protein is Ribonuclease P protein component of Thermus filiformis.